The primary structure comprises 191 residues: Transcription factor FapR (191 aa).

Residues 102–169 (GIARGHHLFA…RILVTSHVNQ (68 aa)) form the MaoC-like domain.

Belongs to the FapR family.

Its function is as follows. Transcriptional factor involved in regulation of membrane lipid biosynthesis by repressing genes involved in fatty acid and phospholipid metabolism. The polypeptide is Transcription factor FapR (Shouchella clausii (strain KSM-K16) (Alkalihalobacillus clausii)).